The following is a 280-amino-acid chain: Para-Rep C2 (280 aa).

The 97-residue stretch at 1–97 folds into the CRESS-DNA virus Rep endonuclease domain; it reads MARRYCFTLN…ETLISEIGIP (97 aa). An RCR-1 motif is present at residues 6-9; it reads CFTL. A divalent metal cation is bound by residues E37 and H45. Positions 45-47 match the RCR-2 motif; sequence HLQ. Residues 54-75 carry the Nuclear localization signal motif; sequence NKIRLGGLKKKFGNRAHWEIAR. The For DNA cleavage activity role is filled by Y84. Positions 84 to 87 match the RCR-3 motif; that stretch reads YCCK. The short motif at 97–103 is the Nuclear localization signal element; sequence PVMKGSN. 172–180 lines the ATP pocket; it reads GSDGGEGKT.

The protein belongs to the nanoviridea/circoviridae replication-associated protein family. In terms of assembly, homooligomer (Potential). Rep binds to repeated DNA motifs (iterons). The cofactor is Mg(2+). Requires Mn(2+) as cofactor.

Its subcellular location is the host nucleus. The enzyme catalyses ATP + H2O = ADP + phosphate + H(+). In terms of biological role, initiates and terminates the replication only of its own subviral DNA molecule. The closed circular ssDNA genome is first converted to a superhelical dsDNA. Rep binds a specific hairpin at the genome origin of replication. Introduces an endonucleolytic nick within the intergenic region of the genome, thereby initiating the rolling circle replication (RCR). Following cleavage, binds covalently to the 5'-phosphate of DNA as a tyrosyl ester. The cleavage gives rise to a free 3'-OH that serves as a primer for the cellular DNA polymerase. The polymerase synthesizes the (+) strand DNA by rolling circle mechanism. After one round of replication, a Rep-catalyzed nucleotidyl transfer reaction releases a circular single-stranded virus genome, thereby terminating the replication. Displays origin-specific DNA cleavage, nucleotidyl transferase, ATPase and helicase activities. This chain is Para-Rep C2 (C2), found in Subterranean clover stunt C2 alphasatellite (SCSC2A).